The primary structure comprises 347 residues: Ribosomal RNA large subunit methyltransferase M (347 aa).

S-adenosyl-L-methionine contacts are provided by residues Ser184, Ala217–Gly220, Asp236, Asp256, and Asp272. Catalysis depends on Lys301, which acts as the Proton acceptor.

This sequence belongs to the class I-like SAM-binding methyltransferase superfamily. RNA methyltransferase RlmE family. RlmM subfamily. As to quaternary structure, monomer.

Its subcellular location is the cytoplasm. The catalysed reaction is cytidine(2498) in 23S rRNA + S-adenosyl-L-methionine = 2'-O-methylcytidine(2498) in 23S rRNA + S-adenosyl-L-homocysteine + H(+). Functionally, catalyzes the 2'-O-methylation at nucleotide C2498 in 23S rRNA. The protein is Ribosomal RNA large subunit methyltransferase M of Xanthomonas campestris pv. campestris (strain 8004).